Here is a 348-residue protein sequence, read N- to C-terminus: Ion-translocating oxidoreductase complex subunit D (348 aa).

3 helical membrane passes run 25–45, 68–88, and 124–144; these read ILAA…GTFI, PISP…IGVA, and AMAA…TWAA. FMN phosphoryl threonine is present on Thr182. 5 consecutive transmembrane segments (helical) span residues 211 to 231, 237 to 257, 263 to 283, 296 to 316, and 317 to 337; these read TGEG…FLLA, WHIS…GFGA, ASPL…FIAT, LLFG…GGYP, and DGVA…DYYI.

The protein belongs to the NqrB/RnfD family. In terms of assembly, the complex is composed of six subunits: RnfA, RnfB, RnfC, RnfD, RnfE and RnfG. FMN is required as a cofactor.

The protein localises to the cell inner membrane. In terms of biological role, part of a membrane-bound complex that couples electron transfer with translocation of ions across the membrane. In Shewanella amazonensis (strain ATCC BAA-1098 / SB2B), this protein is Ion-translocating oxidoreductase complex subunit D.